A 383-amino-acid chain; its full sequence is Meiotic recombination protein SPO11-2 (383 aa).

The 144-residue stretch at 24 to 167 folds into the Topo IIA-type catalytic domain; sequence LLPHEARARI…LGIMASSRGL (144 aa). The O-(5'-phospho-DNA)-tyrosine intermediate role is filled by Y124. Mg(2+) is bound by residues E217 and D270.

The protein belongs to the TOP6A family. As to quaternary structure, heterotetramer of 2 SPO11 (SPO11-1 and/or SPO11-2) and 2 MTOPVIB chains. Interacts with MTOPVIB. May form a heterodimer with SPO11-1. Interacts with PRD1. Does not interact with TOP6B. Requires Mg(2+) as cofactor. Very low expression in flowers and shoots.

It localises to the nucleus. It catalyses the reaction ATP-dependent breakage, passage and rejoining of double-stranded DNA.. Component of a topoisomerase 6 complex specifically required for meiotic recombination. Together with MTOPVIB, mediates DNA cleavage that forms the double-strand breaks (DSB) that initiate meiotic recombination. The complex promotes relaxation of negative and positive supercoiled DNA and DNA decatenation through cleavage and ligation cycles. This Arabidopsis thaliana (Mouse-ear cress) protein is Meiotic recombination protein SPO11-2 (SPO11-2).